Reading from the N-terminus, the 514-residue chain is L-Threonine dehydratase biosynthetic IlvA (514 aa).

Lys62 carries the N6-(pyridoxal phosphate)lysine modification. Residues Asn89, 188-192 (GGGGL), and Ser315 contribute to the pyridoxal 5'-phosphate site. ACT-like domains lie at 339–411 (ALLA…DLSD) and 434–504 (RLYS…DESN).

This sequence belongs to the serine/threonine dehydratase family. In terms of assembly, homotetramer. Pyridoxal 5'-phosphate is required as a cofactor.

It carries out the reaction L-threonine = 2-oxobutanoate + NH4(+). The protein operates within amino-acid biosynthesis; L-isoleucine biosynthesis; 2-oxobutanoate from L-threonine: step 1/1. Isoleucine allosterically inhibits whereas valine allosterically activates this enzyme. Its function is as follows. Catalyzes the anaerobic formation of alpha-ketobutyrate and ammonia from threonine in a two-step reaction. The first step involved a dehydration of threonine and a production of enamine intermediates (aminocrotonate), which tautomerizes to its imine form (iminobutyrate). Both intermediates are unstable and short-lived. The second step is the nonenzymatic hydrolysis of the enamine/imine intermediates to form 2-ketobutyrate and free ammonia. In the low water environment of the cell, the second step is accelerated by RidA. This chain is L-Threonine dehydratase biosynthetic IlvA (ilvA), found in Salmonella typhimurium (strain LT2 / SGSC1412 / ATCC 700720).